A 178-amino-acid polypeptide reads, in one-letter code: Glucagon-2 (178 aa).

The signal sequence occupies residues 1-21; that stretch reads MFGIHSLAGVLLLVIVQSQLA. 3 propeptides span residues 83–87, 123–134, and 171–178; these read SGAPS, ESAEESMNGPMS, and SNKRQEDH.

It belongs to the glucagon family.

It is found in the secreted. Its function is as follows. Promotes hydrolysis of glycogen and lipids, and raises the blood sugar level. This Oncorhynchus mykiss (Rainbow trout) protein is Glucagon-2 (gcg2).